A 69-amino-acid chain; its full sequence is DNA gyrase inhibitor YacG (69 aa).

Residues cysteine 13, cysteine 16, cysteine 32, and cysteine 36 each contribute to the Zn(2+) site.

Belongs to the DNA gyrase inhibitor YacG family. Interacts with GyrB. Zn(2+) serves as cofactor.

Inhibits all the catalytic activities of DNA gyrase by preventing its interaction with DNA. Acts by binding directly to the C-terminal domain of GyrB, which probably disrupts DNA binding by the gyrase. This Neisseria meningitidis serogroup B (strain ATCC BAA-335 / MC58) protein is DNA gyrase inhibitor YacG.